The sequence spans 422 residues: G-protein coupled receptor 151 protein (422 aa).

At 1 to 45 (MGKAMLRAGFADTNSSNMNESFARLHFAGGYLPSDSKDWRTIIPS) the chain is on the extracellular side. N-linked (GlcNAc...) asparagine glycosylation is found at Asn14 and Asn19. The chain crosses the membrane as a helical span at residues 46 to 66 (LLMAVCLVGLVGNLCVIGILL). At 67 to 76 (HGVWKRKPST) the chain is on the cytoplasmic side. Residues 77-97 (IHSLILNLSLADFSLLLFSAP) form a helical membrane-spanning segment. Topologically, residues 98–123 (VRAAAYSKGVWDLGWFICKSSDWFTH) are extracellular. Cys115 and Cys191 are disulfide-bonded. Residues 124–144 (VCMAAKSLTFVVVAKACFAYA) form a helical membrane-spanning segment. Topologically, residues 145 to 157 (SDPAKQESIHSRT) are cytoplasmic. Residues 158–178 (IWSVLAGIWVVASLLPLPEWL) form a helical membrane-spanning segment. Topologically, residues 179 to 205 (FSTTRRHAGVEMCLVDVPAVAEEFMSM) are extracellular. The helical transmembrane segment at 206-226 (FGKLYPLLVFCLPLLLAGVYF) threads the bilayer. The Cytoplasmic segment spans residues 227–259 (WRAYDQCKTRCTKTRNLRDQMRSKQLTVMLLST). The helical transmembrane segment at 260 to 280 (AIISALLWLPEWIAWLWVWHV) threads the bilayer. Residues 281 to 290 (KAGGPMPPQG) are Extracellular-facing. A helical transmembrane segment spans residues 291 to 311 (FIALSQVLMFFTSTANPLIFL). At 312–422 (VMSEEFKAGL…HEGQETEGCN (111 aa)) the chain is on the cytoplasmic side. The interval 339–422 (VQEAPAGNTE…HEGQETEGCN (84 aa)) is disordered. Residues 366-380 (TDGRGSPDDSKEKSG) show a composition bias toward basic and acidic residues.

In terms of tissue distribution, high expression in the brain and lower levels in kidney and liver. In the nervous system expressed specifically in the habenular area (at protein level).

The protein resides in the cell membrane. Proton-sensing G-protein coupled receptor. In Mus musculus (Mouse), this protein is G-protein coupled receptor 151 protein (Gpr151).